A 103-amino-acid chain; its full sequence is uncharacterized protein (103 aa).

This is an uncharacterized protein from Sulfolobus islandicus filamentous virus (isolate Iceland/Hveragerdi) (SIFV).